Here is an 863-residue protein sequence, read N- to C-terminus: Dynamin-3 (863 aa).

Residues 28–294 (LLELPQIAVV…LTNHIRDTLP (267 aa)) form the Dynamin-type G domain. The G1 motif stretch occupies residues 38-45 (GGQSAGKS). Residue 38-46 (GGQSAGKSS) coordinates GTP. Residues 64 to 66 (VTR) are G2 motif. Residues 136–139 (DLPG) form a G3 motif region. The interval 205 to 208 (TKLD) is G4 motif. 205 to 211 (TKLDLMD) is a binding site for GTP. A Phosphotyrosine modification is found at Tyr-231. Residues 235–238 (VNRS) are G5 motif. Residue 236–239 (NRSQ) participates in GTP binding. Residue Lys-299 is modified to N6-acetyllysine. In terms of domain architecture, PH spans 515–621 (QVIRKGWLTV…WKASLLRAGV (107 aa)). Tyr-593 is modified (phosphotyrosine). Lys-594 is subject to N6-acetyllysine. Disordered regions lie at residues 626–647 (SVGS…SMDP) and 742–863 (ATVS…SLLD). Over residues 627-642 (VGSNKTENDENGQAEN) the composition is skewed to polar residues. The 92-residue stretch at 653-744 (VETIRNLVDS…IIGDINTATV (92 aa)) folds into the GED domain. Residues Ser-763 and Ser-767 each carry the phosphoserine modification. Pro residues-rich tracts occupy residues 791–816 (PAIP…PPFP) and 826–849 (PQVP…PSPT). Phosphoserine is present on Ser-847.

The protein belongs to the TRAFAC class dynamin-like GTPase superfamily. Dynamin/Fzo/YdjA family.

Its subcellular location is the cytoplasm. It localises to the cytoskeleton. The catalysed reaction is GTP + H2O = GDP + phosphate + H(+). In terms of biological role, microtubule-associated force-producing protein involved in producing microtubule bundles and able to bind and hydrolyze GTP. Most probably involved in vesicular trafficking processes, in particular endocytosis. The chain is Dynamin-3 (Dnm3) from Mus musculus (Mouse).